We begin with the raw amino-acid sequence, 70 residues long: DNA-directed RNA polymerase subunit epsilon (70 aa).

It belongs to the RNA polymerase subunit epsilon family. RNAP is composed of a core of 2 alpha, a beta and a beta' subunit. The core is associated with a delta subunit, and at least one of epsilon or omega. When a sigma factor is associated with the core the holoenzyme is formed, which can initiate transcription.

It catalyses the reaction RNA(n) + a ribonucleoside 5'-triphosphate = RNA(n+1) + diphosphate. A non-essential component of RNA polymerase (RNAP). The chain is DNA-directed RNA polymerase subunit epsilon from Bacillus cereus (strain Q1).